The sequence spans 426 residues: Multifunctional protein ADE2 (426 aa).

The interval 1-261 (MAPAASELKL…WVAERVELLL (261 aa)) is SAICAR synthetase. An AIR carboxylase region spans residues 262-426 (KTKSQGRVVV…ADKKLRECTL (165 aa)).

The protein in the N-terminal section; belongs to the SAICAR synthetase family. This sequence in the C-terminal section; belongs to the AIR carboxylase family. Class II subfamily. As to quaternary structure, homooctamer.

The catalysed reaction is 5-amino-1-(5-phospho-D-ribosyl)imidazole-4-carboxylate + L-aspartate + ATP = (2S)-2-[5-amino-1-(5-phospho-beta-D-ribosyl)imidazole-4-carboxamido]succinate + ADP + phosphate + 2 H(+). It catalyses the reaction 5-amino-1-(5-phospho-D-ribosyl)imidazole-4-carboxylate + H(+) = 5-amino-1-(5-phospho-beta-D-ribosyl)imidazole + CO2. The protein operates within purine metabolism; IMP biosynthesis via de novo pathway; 5-amino-1-(5-phospho-D-ribosyl)imidazole-4-carboxamide from 5-amino-1-(5-phospho-D-ribosyl)imidazole-4-carboxylate: step 1/2. It functions in the pathway purine metabolism; IMP biosynthesis via de novo pathway; 5-amino-1-(5-phospho-D-ribosyl)imidazole-4-carboxylate from 5-amino-1-(5-phospho-D-ribosyl)imidazole (carboxylase route): step 1/1. This is Multifunctional protein ADE2 (AIRC) from Gallus gallus (Chicken).